The primary structure comprises 95 residues: MAFKPLHDRVLVRRVQSDEKTKGGLIIPDTAKEKPAEGEVVACGEGARKDSGELIAMSVKAGDRVLFGKWSGTEVTIDGAELLIMKESDILGILS.

Belongs to the GroES chaperonin family. Heptamer of 7 subunits arranged in a ring. Interacts with the chaperonin GroEL.

It is found in the cytoplasm. Functionally, together with the chaperonin GroEL, plays an essential role in assisting protein folding. The GroEL-GroES system forms a nano-cage that allows encapsulation of the non-native substrate proteins and provides a physical environment optimized to promote and accelerate protein folding. GroES binds to the apical surface of the GroEL ring, thereby capping the opening of the GroEL channel. This chain is Co-chaperonin GroES, found in Cereibacter sphaeroides (strain ATCC 17025 / ATH 2.4.3) (Rhodobacter sphaeroides).